Here is a 540-residue protein sequence, read N- to C-terminus: MAKDPGRVLIFDTTLRDGEQSPGASLNLEEKLAIAQQLARLGVDVIEAGFPFASPGDFAAVQRIAQQVGGDNGPIICGLARASRADIKACADAVAPAPRRRIHTFIATSDIHLEHKLRKSRGDVLGIVPEMVSYARSLVEDVEFSCEDAGRSDPEFLYEVIEAAIAAGATTINIPDTVGYTTPSEFGALIAGINQHVPNIGEAVISVHGHNDLGLAVANFLEAVKNGARQLECTINGIGERAGNASLEELVMALHVRRRYYNPFFGREEDSPTPLTAVRTEEITKTSRLVSNLTGMVVQPNKAIVGANAFAHESGIHQDGVLKNRLTYEIIDAQTVGLSDNRISLGKLSGRSAVRARLEELGYDLTREDLDEAFARFKELADRKREITDRDLEAIVSEQVQQPEARFQLKLVQVSCGSSLRPTATVTLLDEEGSETTGSAVGTGPVDAVCRALNDLAGVPNELIEFSVKSVTEGIDAMGDVTIRLRRNGALYSGHAADTDVVVAAGMAFVNALNRLVAGEERQSLHPQKDPVVLESRPTL.

One can recognise a Pyruvate carboxyltransferase domain in the interval 8 to 271 (VLIFDTTLRD…NPFFGREEDS (264 aa)). Residues aspartate 17, histidine 208, histidine 210, and asparagine 244 each contribute to the Mn(2+) site. Positions 408–540 (QLKLVQVSCG…PVVLESRPTL (133 aa)) are regulatory domain.

Belongs to the alpha-IPM synthase/homocitrate synthase family. LeuA type 1 subfamily. Homodimer. The cofactor is Mn(2+).

The protein resides in the cytoplasm. It catalyses the reaction 3-methyl-2-oxobutanoate + acetyl-CoA + H2O = (2S)-2-isopropylmalate + CoA + H(+). The protein operates within amino-acid biosynthesis; L-leucine biosynthesis; L-leucine from 3-methyl-2-oxobutanoate: step 1/4. Its function is as follows. Catalyzes the condensation of the acetyl group of acetyl-CoA with 3-methyl-2-oxobutanoate (2-ketoisovalerate) to form 3-carboxy-3-hydroxy-4-methylpentanoate (2-isopropylmalate). The chain is 2-isopropylmalate synthase from Synechococcus sp. (strain CC9605).